We begin with the raw amino-acid sequence, 476 residues long: ATP synthase subunit beta, chloroplastic (476 aa).

156 to 163 lines the ATP pocket; that stretch reads GGAGVGKT.

It belongs to the ATPase alpha/beta chains family. In terms of assembly, F-type ATPases have 2 components, CF(1) - the catalytic core - and CF(0) - the membrane proton channel. CF(1) has five subunits: alpha(3), beta(3), gamma(1), delta(1), epsilon(1). CF(0) has four main subunits: a(1), b(1), b'(1) and c(9-12).

It localises to the plastid. The protein resides in the chloroplast thylakoid membrane. The catalysed reaction is ATP + H2O + 4 H(+)(in) = ADP + phosphate + 5 H(+)(out). In terms of biological role, produces ATP from ADP in the presence of a proton gradient across the membrane. The catalytic sites are hosted primarily by the beta subunits. The sequence is that of ATP synthase subunit beta, chloroplastic from Fucus vesiculosus (Bladder wrack).